Reading from the N-terminus, the 437-residue chain is D-aminoacyl-tRNA deacylase (437 aa).

It belongs to the DtdA deacylase family. As to quaternary structure, monomer. Zn(2+) serves as cofactor.

It carries out the reaction a D-aminoacyl-tRNA + H2O = a tRNA + a D-alpha-amino acid + H(+). The catalysed reaction is glycyl-tRNA(Ala) + H2O = tRNA(Ala) + glycine + H(+). Functionally, D-aminoacyl-tRNA deacylase with broad substrate specificity. By recycling D-aminoacyl-tRNA to D-amino acids and free tRNA molecules, this enzyme counteracts the toxicity associated with the formation of D-aminoacyl-tRNA entities in vivo. The sequence is that of D-aminoacyl-tRNA deacylase from Methanoculleus marisnigri (strain ATCC 35101 / DSM 1498 / JR1).